The chain runs to 40 residues: Photosystem II reaction center protein J (40 aa).

The chain crosses the membrane as a helical span at residues Leu10–Tyr30.

It belongs to the PsbJ family. As to quaternary structure, PSII is composed of 1 copy each of membrane proteins PsbA, PsbB, PsbC, PsbD, PsbE, PsbF, PsbH, PsbI, PsbJ, PsbK, PsbL, PsbM, PsbT, PsbX, PsbY, PsbZ, Psb30/Ycf12, at least 3 peripheral proteins of the oxygen-evolving complex and a large number of cofactors. It forms dimeric complexes.

It localises to the plastid. It is found in the chloroplast thylakoid membrane. Functionally, one of the components of the core complex of photosystem II (PSII). PSII is a light-driven water:plastoquinone oxidoreductase that uses light energy to abstract electrons from H(2)O, generating O(2) and a proton gradient subsequently used for ATP formation. It consists of a core antenna complex that captures photons, and an electron transfer chain that converts photonic excitation into a charge separation. In Marchantia polymorpha (Common liverwort), this protein is Photosystem II reaction center protein J.